The sequence spans 762 residues: Subtilisin-like protease SBT3.11 (762 aa).

The N-terminal stretch at 1–16 (MMSSIVSWWFFWVISA) is a signal peptide. Positions 17–116 (VCILKVEFNI…VTPNTFYELQ (100 aa)) are cleaved as a propeptide — activation peptide. Positions 37–115 (VHIVYLGEKE…QVTPNTFYEL (79 aa)) constitute an Inhibitor I9 domain. A Peptidase S8 domain is found at 120 to 609 (TFDYLGLSHS…GGLVNPNKAA (490 aa)). Asp-150 serves as the catalytic Charge relay system. Asn-206 carries N-linked (GlcNAc...) asparagine glycosylation. Catalysis depends on His-226, which acts as the Charge relay system. 2 N-linked (GlcNAc...) asparagine glycosylation sites follow: Asn-241 and Asn-371. Residue Ser-540 is the Charge relay system of the active site.

Belongs to the peptidase S8 family.

It localises to the secreted. The chain is Subtilisin-like protease SBT3.11 from Arabidopsis thaliana (Mouse-ear cress).